An 806-amino-acid polypeptide reads, in one-letter code: Phenylalanine--tRNA ligase beta subunit (806 aa).

The tRNA-binding domain occupies 40–155 (NKGVKGVVVG…SDAEVGADAL (116 aa)). Residues 409 to 484 (VQERTVSVTA…RLYGYDHIPV (76 aa)) enclose the B5 domain. 4 residues coordinate Mg(2+): Asp-462, Asp-468, Glu-471, and Glu-472. The region spanning 712–805 (PRFPSMTRDM…VEEKFGAELR (94 aa)) is the FDX-ACB domain.

Belongs to the phenylalanyl-tRNA synthetase beta subunit family. Type 1 subfamily. Tetramer of two alpha and two beta subunits. Mg(2+) is required as a cofactor.

It is found in the cytoplasm. It catalyses the reaction tRNA(Phe) + L-phenylalanine + ATP = L-phenylalanyl-tRNA(Phe) + AMP + diphosphate + H(+). The protein is Phenylalanine--tRNA ligase beta subunit of Bacillus cereus (strain ZK / E33L).